The sequence spans 102 residues: Neuropeptide F (102 aa).

Positions 1–29 (MSNTMRCILIVCVALTLIAAGCNVEASNS) are cleaved as a signal peptide. Residues 30-32 (RPP) constitute a propeptide that is removed on maturation. Phe-62 carries the phenylalanine amide modification. Positions 66–102 (GGPLMEMLRNRELENNMAKSINSGGELIRALDEEEVF) are excised as a propeptide.

It belongs to the NPY family.

It localises to the secreted. Functionally, an integral part of the sensory system that mediates food signaling, providing the neural basis for the regulation of food response; coordinates larval foraging and social behavior changes during development. May have a hormonal role in females. This is Neuropeptide F from Drosophila pseudoobscura pseudoobscura (Fruit fly).